The chain runs to 392 residues: Lysine acetyltransferase (392 aa).

It carries out the reaction L-lysine + acetyl-CoA = N(6)-acetyl-L-lysine + CoA + H(+). Its pathway is amino-acid degradation; L-lysine degradation via acetylation pathway; glutarate from L-lysine: step 1/6. With respect to regulation, activity is inhibited by 5-aminovalerate. Its function is as follows. Lysine N-6-acetyl transferase (LAT) that catalyzes the first step of the lysine degradation pathway. The sequence is that of Lysine acetyltransferase from Yarrowia lipolytica (strain CLIB 122 / E 150) (Yeast).